Consider the following 390-residue polypeptide: Protein-glutamate methylesterase/protein-glutamine glutaminase 1 (390 aa).

One can recognise a Response regulatory domain in the interval 4-121; sequence KVLVVDDSGF…SRNPQKVKQL (118 aa). Asp-55 bears the 4-aspartylphosphate mark. A compositionally biased stretch (low complexity) spans 132–186; sequence SNRRSSGIGSASAASPAPAAPAPSTLSSRAPAPSAAAPARAVPSRTVAPAAAPAA. The tract at residues 132–201 is disordered; that stretch reads SNRRSSGIGS…PAHPTTTGTA (70 aa). The 193-residue stretch at 195–387 folds into the CheB-type methylesterase domain; the sequence is PTTTGTAKRK…LDDIGRHLVE (193 aa). Catalysis depends on residues Ser-214, His-241, and Asp-334.

This sequence belongs to the CheB family. In terms of processing, phosphorylated by CheA. Phosphorylation of the N-terminal regulatory domain activates the methylesterase activity.

It localises to the cytoplasm. The catalysed reaction is [protein]-L-glutamate 5-O-methyl ester + H2O = L-glutamyl-[protein] + methanol + H(+). The enzyme catalyses L-glutaminyl-[protein] + H2O = L-glutamyl-[protein] + NH4(+). In terms of biological role, involved in chemotaxis. Part of a chemotaxis signal transduction system that modulates chemotaxis in response to various stimuli. Catalyzes the demethylation of specific methylglutamate residues introduced into the chemoreceptors (methyl-accepting chemotaxis proteins or MCP) by CheR. Also mediates the irreversible deamidation of specific glutamine residues to glutamic acid. This Pseudomonas syringae pv. tomato (strain ATCC BAA-871 / DC3000) protein is Protein-glutamate methylesterase/protein-glutamine glutaminase 1.